The following is a 606-amino-acid chain: Vacuolar calcium ion transporter (606 aa).

The segment at 1 to 110 is disordered; it reads MSPPRRVSFP…NSLDPNPGLM (110 aa). Topologically, residues 1–137 are cytoplasmic; that stretch reads MSPPRRVSFP…PTYWGSMKAA (137 aa). Residues 18-30 show a composition bias toward low complexity; it reads PPLADSPLSSPKL. Residues 36–56 show a composition bias toward polar residues; the sequence is QSSSTPIVSSNLPTDTTNSAS. The chain crosses the membrane as a helical span at residues 138–158; that stretch reads ITSTWLNVLLVFIPIGWALYL. At 159–170 the chain is on the vacuolar side; sequence AKHNGGKDSISD. A helical membrane pass occupies residues 171–191; it reads TAVFCCTFIAIIPLAGLLGFA. Residues 192–204 are Cytoplasmic-facing; that stretch reads TEEAALRLGQTLG. The helical transmembrane segment at 205 to 225 threads the bilayer; sequence GLLNATLGNAVELIVAILALI. The Vacuolar segment spans residues 226–236; it reads KCELQVVQSSL. Residues 237-257 traverse the membrane as a helical segment; sequence VGSILSNILLVLGMCFFAGGV. At 258–272 the chain is on the cytoplasmic side; sequence RFAEQAIKSTAAQLN. A helical transmembrane segment spans residues 273–293; the sequence is ASLLLIAVIAVLIPSAFHFSI. The Vacuolar segment spans residues 294 to 313; it reads SSSTSNTDASELANGEGADL. Residues 314–334 traverse the membrane as a helical segment; the sequence is LSMSHAVSILLLILYLGYLLF. Residues 335-437 are Cytoplasmic-facing; it reads QMWTHATYYV…EEEEETPQMN (103 aa). The segment at 376–434 is disordered; sequence DEEESYSTATTVSDAAVPPSARAEGGEVPATHGPGTAAAETGNRVEHEDAEEEEEEETP. The span at 423–433 shows a compositional bias: acidic residues; the sequence is EDAEEEEEEET. A helical transmembrane segment spans residues 438-458; that stretch reads VVCTIALMVIDTVLVGVTAEF. At 459–477 the chain is on the vacuolar side; it reads LVDSINGMVESNPSLSAEW. Residues 478-498 form a helical membrane-spanning segment; it reads VGLILLPIVGNAAEHFTAVSV. Topologically, residues 499–505 are cytoplasmic; sequence SVKDKLD. Residues 506–526 form a helical membrane-spanning segment; the sequence is LSISVAVGSSIQIALFVIPVI. The Vacuolar segment spans residues 527 to 535; the sequence is ELLAWTIGK. The chain crosses the membrane as a helical span at residues 536–556; that stretch reads PMTLLFDPYESIVLFLSVLIV. Residues 557-566 are Cytoplasmic-facing; that stretch reads NQTLADGRSN. A helical transmembrane segment spans residues 567-587; the sequence is WMEGMVLMMLYIIIAVSFWYY. Over 588-606 the chain is Vacuolar; the sequence is PGSTTATLLGCQDSSSVTG.

Belongs to the Ca(2+):cation antiporter (CaCA) (TC 2.A.19) family.

It is found in the vacuole membrane. Functionally, has a role in promoting intracellular calcium ion sequestration via the exchange of calcium ions for hydrogen ions across the vacuolar membrane. This Cryptococcus neoformans var. grubii serotype A (strain H99 / ATCC 208821 / CBS 10515 / FGSC 9487) (Filobasidiella neoformans var. grubii) protein is Vacuolar calcium ion transporter.